The sequence spans 147 residues: Mediator of RNA polymerase II transcription subunit 10 (147 aa).

Belongs to the Mediator complex subunit 10 family. Component of the Mediator complex.

It is found in the nucleus. In terms of biological role, component of the Mediator complex, a coactivator involved in the regulated transcription of nearly all RNA polymerase II-dependent genes. Mediator functions as a bridge to convey information from gene-specific regulatory proteins to the basal RNA polymerase II transcription machinery. Mediator is recruited to promoters by direct interactions with regulatory proteins and serves as a scaffold for the assembly of a functional preinitiation complex with RNA polymerase II and the general transcription factors. The protein is Mediator of RNA polymerase II transcription subunit 10 (NUT2) of Debaryomyces hansenii (strain ATCC 36239 / CBS 767 / BCRC 21394 / JCM 1990 / NBRC 0083 / IGC 2968) (Yeast).